The primary structure comprises 400 residues: Phosphoglycerate kinase (400 aa).

Substrate-binding positions include 21-23 (DLN), Arg36, 59-62 (HLGR), Arg116, and Arg149. ATP contacts are provided by residues Lys200, Glu317, and 343-346 (GGDT).

The protein belongs to the phosphoglycerate kinase family. Monomer.

The protein resides in the cytoplasm. The enzyme catalyses (2R)-3-phosphoglycerate + ATP = (2R)-3-phospho-glyceroyl phosphate + ADP. The protein operates within carbohydrate degradation; glycolysis; pyruvate from D-glyceraldehyde 3-phosphate: step 2/5. This chain is Phosphoglycerate kinase, found in Blochmanniella floridana.